We begin with the raw amino-acid sequence, 97 residues long: Protein Vpr (97 aa).

The segment at Met-1–Leu-42 is homooligomerization. Ser-79, Ser-95, and Ser-97 each carry phosphoserine; by host.

This sequence belongs to the HIV-1 VPR protein family. As to quaternary structure, homooligomer, may form homodimer. Interacts with p6-gag region of the Pr55 Gag precursor protein through a (Leu-X-X)4 motif near the C-terminus of the P6gag protein. Interacts with host UNG. May interact with host RAD23A/HHR23A. Interacts with host VPRBP/DCAF1, leading to hijack the CUL4A-RBX1-DDB1-DCAF1/VPRBP complex, mediating ubiquitination of host proteins such as TERT and ZGPAT and arrest of the cell cycle in G2 phase. Phosphorylated on several residues by host. These phosphorylations regulate VPR activity for the nuclear import of the HIV-1 pre-integration complex.

The protein resides in the virion. The protein localises to the host nucleus. Its subcellular location is the host extracellular space. Its function is as follows. During virus replication, may deplete host UNG protein, and incude G2-M cell cycle arrest. Acts by targeting specific host proteins for degradation by the 26S proteasome, through association with the cellular CUL4A-DDB1 E3 ligase complex by direct interaction with host VPRPB/DCAF-1. Cell cycle arrest reportedly occurs within hours of infection and is not blocked by antiviral agents, suggesting that it is initiated by the VPR carried into the virion. Additionally, VPR induces apoptosis in a cell cycle dependent manner suggesting that these two effects are mechanistically linked. Detected in the serum and cerebrospinal fluid of AIDS patient, VPR may also induce cell death to bystander cells. In terms of biological role, during virus entry, plays a role in the transport of the viral pre-integration (PIC) complex to the host nucleus. This function is crucial for viral infection of non-dividing macrophages. May act directly at the nuclear pore complex, by binding nucleoporins phenylalanine-glycine (FG)-repeat regions. The chain is Protein Vpr from Human immunodeficiency virus type 1 group M subtype B (isolate YU-2) (HIV-1).